The primary structure comprises 186 residues: Zinc finger AN1 domain-containing stress-associated protein 12 (186 aa).

2 AN1-type zinc fingers span residues 10 to 58 (PDLG…HGSR) and 97 to 147 (KKKK…INTA). Zn(2+) contacts are provided by Cys-16, Cys-21, Cys-31, Cys-34, Cys-39, His-42, His-48, Cys-50, Cys-103, Cys-108, Cys-120, Cys-123, Cys-128, His-131, His-137, and Cys-139. The interval 167-186 (KGCGRGSSVSSKSSPSVRSF) is disordered. The segment covering 172–186 (GSSVSSKSSPSVRSF) has biased composition (low complexity).

Functionally, may be involved in environmental stress response. The polypeptide is Zinc finger AN1 domain-containing stress-associated protein 12 (SAP12) (Arabidopsis thaliana (Mouse-ear cress)).